Reading from the N-terminus, the 327-residue chain is Alkene monooxygenase system, ferredoxin--NAD(+) reductase component (327 aa).

One can recognise a 2Fe-2S ferredoxin-type domain in the interval 1 to 89 (MRLNDGRSFS…DLEINVRAGD (89 aa)). Residues cysteine 32, cysteine 37, cysteine 40, and cysteine 73 each coordinate [2Fe-2S] cluster. In terms of domain architecture, FAD-binding FR-type spans 96 to 194 (PRRHAARVTV…EGPYGRAYLR (99 aa)).

The protein belongs to the bacterial ring-hydroxylating dioxygenase ferredoxin reductase family. In terms of assembly, monomer. The alkene monooxygenase multicomponent enzyme system is composed of an electron transfer component and a monooxygenase component interacting with the effector protein XamoD. The electron transfer component is composed of a ferredoxin reductase (XamoF) and a ferredoxin (XamoC), and the monooxygenase component is formed by a heterohexamer (dimer of heterotrimers) of two alpha subunits (XamoA), two beta subunits (XamoE) and two gamma subunits (XamoB). FAD serves as cofactor. The cofactor is [2Fe-2S] cluster.

The protein localises to the cytoplasm. It catalyses the reaction 2 reduced [2Fe-2S]-[ferredoxin] + NAD(+) + H(+) = 2 oxidized [2Fe-2S]-[ferredoxin] + NADH. Its function is as follows. Reductase component of the alkene monooxygenase multicomponent enzyme system which catalyzes the O2- and NADH-dependent epoxidation of short chain (C2 to C6) alkenes to their corresponding epoxides. Ferredoxin reductase catalyzes the transfer of electrons from NADH to ferredoxin (XamoC). NADPH is also effective but with a rate approximately 3-fold lower than with NADH. This chain is Alkene monooxygenase system, ferredoxin--NAD(+) reductase component, found in Xanthobacter autotrophicus (strain ATCC BAA-1158 / Py2).